The primary structure comprises 566 residues: Serine/threonine-protein kinase ppk14 (566 aa).

The span at 1–31 shows a compositional bias: basic and acidic residues; it reads MNELHDGESSEEGRINVEDHLEEAKKDDTGH. Disordered stretches follow at residues 1 to 39 and 60 to 152; these read MNEL…GTAK and SRKK…EKLK. A compositionally biased stretch (polar residues) spans 74–85; it reads AANQSPSGAPES. Residues 119–129 show a composition bias toward basic residues; it reads SFFKSGRKKKD. A compositionally biased stretch (polar residues) spans 134-145; that stretch reads RNVSRSNGADTS. The region spanning 195–485 is the Protein kinase domain; sequence FEKVFLLGKG…AADVKLHPFF (291 aa). Residues 201–209 and Lys224 contribute to the ATP site; that span reads LGKGDVGRV. Catalysis depends on Asp320, which acts as the Proton acceptor. Thr379 is modified (phosphothreonine). The residue at position 381 (Ser381) is a Phosphoserine. Thr385 bears the Phosphothreonine mark.

Belongs to the protein kinase superfamily. Ser/Thr protein kinase family. KIN82 subfamily.

It carries out the reaction L-seryl-[protein] + ATP = O-phospho-L-seryl-[protein] + ADP + H(+). The enzyme catalyses L-threonyl-[protein] + ATP = O-phospho-L-threonyl-[protein] + ADP + H(+). In Schizosaccharomyces pombe (strain 972 / ATCC 24843) (Fission yeast), this protein is Serine/threonine-protein kinase ppk14 (ppk14).